A 652-amino-acid chain; its full sequence is Transmembrane 9 superfamily member 12 (652 aa).

The first 20 residues, 1–20 (MFGVYRVFVLLVFVSQLCNG), serve as a signal peptide directing secretion. At 21–286 (FYLPGSYMHT…LKMEGARVHW (266 aa)) the chain is on the lumenal side. A helical membrane pass occupies residues 287–307 (FSILNSLMVIFFLAGIVFVIF). Residues 308-362 (LRTVRRDLTKYEELDKEAQAQMNEELSGWKLVVGDVFREPEMSKLLCIMVGDGVR) lie on the Cytoplasmic side of the membrane. Residues 363–383 (ITGMAVVTIVFAALGFMSPAS) traverse the membrane as a helical segment. The Lumenal segment spans residues 384–386 (RGM). A helical transmembrane segment spans residues 387–407 (LLTGMIILYLFLGIVAGYAGV). The Cytoplasmic portion of the chain corresponds to 408–426 (RLWRTVKGTSEGWRSLSWS). Residues 427-447 (IACFFPGIAFVILTVLNFLLW) form a helical membrane-spanning segment. Over 448–460 (SSNSTGAIPISLY) the chain is Lumenal. Residues 461-481 (FELLALWFCISVPLTLFGGFL) traverse the membrane as a helical segment. The Cytoplasmic portion of the chain corresponds to 482 to 510 (GTRAEAIQFPVRTNQIPREIPERKYPSWL). Residues 511-531 (LVLGAGTLPFGTLFIELFFIF) form a helical membrane-spanning segment. The Lumenal portion of the chain corresponds to 532 to 541 (SSIWLGRFYY). The helical transmembrane segment at 542 to 562 (VFGFLLIVLLLLVVVCAEVSV) threads the bilayer. At 563 to 580 (VLTYMHLCVEDWRWWWKA) the chain is on the cytoplasmic side. A helical membrane pass occupies residues 581–601 (FYASGSVALYVFAYSINYLVF). The Lumenal segment spans residues 602–613 (DLQSLSGPVSAM). A helical transmembrane segment spans residues 614–634 (LYIGYSLLMAIAIMLATGTIG). Topologically, residues 635–652 (FLTSFYFVHYLFSSVKID) are cytoplasmic. Residues 641–646 (FVHYLF) carry the Endoplasmic reticulum export signal motif. The Golgi retention signal motif lies at 650-652 (KID).

The protein belongs to the nonaspanin (TM9SF) (TC 9.A.2) family.

The protein resides in the endosome membrane. It localises to the golgi apparatus membrane. This is Transmembrane 9 superfamily member 12 from Arabidopsis thaliana (Mouse-ear cress).